The following is a 222-amino-acid chain: Secreted protein D (222 aa).

A signal peptide spans 1–22 (MKIYYLFFVLIYLIYFINLVYC). Asn-25 carries an N-linked (GlcNAc...) asparagine glycan.

This sequence belongs to the Sct family.

Its subcellular location is the secreted. The chain is Secreted protein D from Dictyostelium discoideum (Social amoeba).